A 91-amino-acid polypeptide reads, in one-letter code: Uteroglobin (91 aa).

The N-terminal stretch at 1–21 (MKLTIAIVLVTLTLFCRPAST) is a signal peptide.

It belongs to the secretoglobin family. Antiparallel homodimer; disulfide-linked. Interaction with LMBR1L is controversial.

The protein localises to the secreted. Its function is as follows. Binds phosphatidylcholine, phosphatidylinositol, polychlorinated biphenyls (PCB) and weakly progesterone, potent inhibitor of phospholipase A2. This chain is Uteroglobin (SCGB1A1), found in Bos taurus (Bovine).